The primary structure comprises 116 residues: Bacterial microcompartment shell protein CutR (116 aa).

One can recognise a BMC circularly permuted domain in the interval 10–108 (RIIQESVPGK…LEYFKNSLGF (99 aa)).

It belongs to the EutS/PduU family. As to quaternary structure, has been crystallized in 5 structures (all are mutated, 3 have an N-terminal His-tag), most are homohexameric with a central pore. In two the homohexamer lies flat with a beta-barrel on the flat face created by the protruding N termini of the six chains. In 2 others the hexamer is not flat but has a six-fold screw axis; the screw pitch is 33.8 or 41.9 Angstroms depending on the structure. Interacts with the BMC major shell protein.

The protein localises to the bacterial microcompartment. The protein operates within amine and polyamine metabolism; choline degradation. Its function is as follows. A minor shell protein of the choline degradation-specific bacterial microcompartment (BMC). Proteins such as this one with circularly permuted BMC domains may play a key role in conferring heterogeneity and flexibility in this BMC. The protein is Bacterial microcompartment shell protein CutR of Streptococcus intermedius (strain ATCC 27335 / DSM 20573 / CCUG 32759 / CIP 103248 / JCM 12996 / LMG 17840 / NCTC 11324 / SK54 / 1877).